The sequence spans 335 residues: Deoxyhypusine hydroxylase (335 aa).

HEAT-like PBS-type repeat units follow at residues 71-97 (LKHE…VAKD), 104-130 (CRHE…LRDN), 200-233 (LRYR…GLKD), 238-264 (FRHE…ALSN), and 271-298 (VRHE…FLND). Residues His73, Glu74, His106, and Glu107 each coordinate Fe cation. Residues His240, Glu241, His273, and Glu274 each coordinate Fe cation.

It belongs to the deoxyhypusine hydroxylase family. Fe(2+) serves as cofactor.

The protein resides in the cytoplasm. Its subcellular location is the nucleus. The enzyme catalyses [eIF5A protein]-deoxyhypusine + AH2 + O2 = [eIF5A protein]-hypusine + A + H2O. It functions in the pathway protein modification; eIF5A hypusination. Catalyzes the hydroxylation of the N(6)-(4-aminobutyl)-L-lysine intermediate to form hypusine, an essential post-translational modification only found in mature eIF-5A factor. The sequence is that of Deoxyhypusine hydroxylase (lia1) from Neosartorya fischeri (strain ATCC 1020 / DSM 3700 / CBS 544.65 / FGSC A1164 / JCM 1740 / NRRL 181 / WB 181) (Aspergillus fischerianus).